The following is a 356-amino-acid chain: Cell division protein ZipA (356 aa).

Residues 1-6 (MEDLQL) lie on the Periplasmic side of the membrane. The chain crosses the membrane as a helical span at residues 7–27 (VLFVLGAIAIVAVLVHGFWSI). Over 28-356 (RRQQPKSLKD…DYLHRIRANA (329 aa)) the chain is Cytoplasmic. Positions 132–155 (PAQPDFSLQPPVAKEQHRGPKVSR) are disordered.

The protein belongs to the ZipA family. As to quaternary structure, interacts with FtsZ via their C-terminal domains.

The protein localises to the cell inner membrane. In terms of biological role, essential cell division protein that stabilizes the FtsZ protofilaments by cross-linking them and that serves as a cytoplasmic membrane anchor for the Z ring. Also required for the recruitment to the septal ring of downstream cell division proteins. In Shewanella baltica (strain OS185), this protein is Cell division protein ZipA.